Reading from the N-terminus, the 166-residue chain is Phospholipase A2 myotoxin inhibitor protein (166 aa).

An N-terminal signal peptide occupies residues 1–19 (MRLILLSGLLLLGTFLANG). The region spanning 46-161 (LKYAFLTVHK…CDDNLLVVCE (116 aa)) is the C-type lectin domain. 2 cysteine pairs are disulfide-bonded: C83-C160 and C138-C152. N122 is a glycosylation site (N-linked (GlcNAc...) asparagine).

The protein belongs to the alpha-type phospholipase A2 inhibitor family. As to quaternary structure, oligomer. Homotrimer; non-covalently linked. Post-translationally, glycosylated. The glycosylation has no role in the association of this PLI and PA2 enzyme. In terms of tissue distribution, expressed by the liver.

It localises to the secreted. In terms of biological role, this phospholipase A2 inhibitor binds directly phospholipase A2 in the presence or absence of calcium. Has anti-enzymatic, anti-myotoxic, anti-edema inducing, anti-cytotoxic, anti-bactericidal, and anti-lethal properties against basic and acidic phospholipases A2 from Bothrops venoms. This Bothrops moojeni (Lance-headed viper) protein is Phospholipase A2 myotoxin inhibitor protein.